Reading from the N-terminus, the 291-residue chain is D-alanine--D-alanine ligase (291 aa).

In terms of domain architecture, ATP-grasp spans 99–291 (KRIVKSLGIN…FKKLISIIIT (193 aa)). Residue 125 to 179 (EWNKFPAVVKPVREGSSVGLKIVESLEELKEYALDLLKKTERVMVEEFVEGRDMT) participates in ATP binding. The Mg(2+) site is built by D245, E258, and N260.

It belongs to the D-alanine--D-alanine ligase family. Mg(2+) serves as cofactor. It depends on Mn(2+) as a cofactor.

The protein resides in the cytoplasm. It carries out the reaction 2 D-alanine + ATP = D-alanyl-D-alanine + ADP + phosphate + H(+). It participates in cell wall biogenesis; peptidoglycan biosynthesis. Cell wall formation. The sequence is that of D-alanine--D-alanine ligase from Aquifex aeolicus (strain VF5).